Reading from the N-terminus, the 946-residue chain is Bifunctional glutamine synthetase adenylyltransferase/adenylyl-removing enzyme (946 aa).

Positions 1-440 (MKPLSSPLQQ…VFNELIGDDE (440 aa)) are adenylyl removase. The segment at 449 to 946 (SEQWRELWQD…VSWQKWLVEE (498 aa)) is adenylyl transferase.

It belongs to the GlnE family. It depends on Mg(2+) as a cofactor.

It carries out the reaction [glutamine synthetase]-O(4)-(5'-adenylyl)-L-tyrosine + phosphate = [glutamine synthetase]-L-tyrosine + ADP. The catalysed reaction is [glutamine synthetase]-L-tyrosine + ATP = [glutamine synthetase]-O(4)-(5'-adenylyl)-L-tyrosine + diphosphate. In terms of biological role, involved in the regulation of glutamine synthetase GlnA, a key enzyme in the process to assimilate ammonia. When cellular nitrogen levels are high, the C-terminal adenylyl transferase (AT) inactivates GlnA by covalent transfer of an adenylyl group from ATP to specific tyrosine residue of GlnA, thus reducing its activity. Conversely, when nitrogen levels are low, the N-terminal adenylyl removase (AR) activates GlnA by removing the adenylyl group by phosphorolysis, increasing its activity. The regulatory region of GlnE binds the signal transduction protein PII (GlnB) which indicates the nitrogen status of the cell. This chain is Bifunctional glutamine synthetase adenylyltransferase/adenylyl-removing enzyme, found in Escherichia coli (strain SMS-3-5 / SECEC).